A 220-amino-acid polypeptide reads, in one-letter code: Ribonuclease HII (220 aa).

One can recognise an RNase H type-2 domain in the interval 16-216; it reads PVFAGIDEAG…VRPNPAAEEQ (201 aa). Positions 22, 23, and 114 each coordinate a divalent metal cation.

It belongs to the RNase HII family. Requires Mn(2+) as cofactor. Mg(2+) serves as cofactor.

It localises to the cytoplasm. It catalyses the reaction Endonucleolytic cleavage to 5'-phosphomonoester.. Its function is as follows. Endonuclease that specifically degrades the RNA of RNA-DNA hybrids. In Nitratidesulfovibrio vulgaris (strain ATCC 29579 / DSM 644 / CCUG 34227 / NCIMB 8303 / VKM B-1760 / Hildenborough) (Desulfovibrio vulgaris), this protein is Ribonuclease HII.